A 123-amino-acid chain; its full sequence is Small ribosomal subunit protein uS8 (123 aa).

Belongs to the universal ribosomal protein uS8 family. Part of the 30S ribosomal subunit. Contacts proteins S5 and S12.

In terms of biological role, one of the primary rRNA binding proteins, it binds directly to 16S rRNA central domain where it helps coordinate assembly of the platform of the 30S subunit. The sequence is that of Small ribosomal subunit protein uS8 (rpsH) from Carsonella ruddii (strain PV).